Consider the following 153-residue polypeptide: Adenosine 5'-monophosphoramidase HINT3 (153 aa).

Residues 20–130 enclose the HIT domain; sequence IFCRIANKQE…PASQLGFLSR (111 aa). Residues 46–47 and 115–117 each bind AMP; these read DI and HLH. Positions 113-117 match the Histidine triad motif motif; the sequence is HLHLH. Residue His115 is the Tele-AMP-histidine intermediate of the active site.

It belongs to the HINT family. Forms dimers to octamers and even larger oligomer.

It is found in the cytoplasm. Its subcellular location is the nucleus. The catalysed reaction is adenosine 5'-phosphoramidate + H2O = AMP + NH4(+). Its function is as follows. Exhibits adenosine 5'-monophosphoramidase activity, hydrolyzing purine nucleotide phosphoramidates with a single phosphate group such as adenosine 5'monophosphoramidate (AMP-NH2) to yield AMP and NH2. Hydrolyzes lysyl-AMP (AMP-N-epsilon-(N-alpha-acetyl lysine methyl ester)) generated by lysine tRNA ligase. This is Adenosine 5'-monophosphoramidase HINT3 (hint3) from Xenopus tropicalis (Western clawed frog).